The following is a 164-amino-acid chain: DNA-directed RNA polymerase 19 kDa subunit (164 aa).

The segment covering 1 to 35 (MADTDDIIDYESDDLTEYEDDDEEEEDGESLETSD) has biased composition (acidic residues). The segment at 1–39 (MADTDDIIDYESDDLTEYEDDDEEEEDGESLETSDIDPK) is disordered.

The protein belongs to the poxviridae DNA-directed RNA polymerase 19 kDa subunit family. The DNA-dependent RNA polymerase used for intermediate and late genes expression consists of eight subunits Rpo30/OPG66, Rpo7/OPG90, Rpo22/OPG103, Rpo147/OPG105, Rpo18/OPG119, Rpo19/OPG131, Rpo132/OPG151 and Rpo35/OPG156. The same holoenzyme, with the addition of the transcription-specificity factor OPG109, is used for early gene expression.

It localises to the virion. It catalyses the reaction RNA(n) + a ribonucleoside 5'-triphosphate = RNA(n+1) + diphosphate. Functionally, part of the DNA-dependent RNA polymerase which catalyzes the transcription of viral DNA into RNA using the four ribonucleoside triphosphates as substrates. Responsible for the transcription of early, intermediate and late genes. DNA-dependent RNA polymerase associates with the early transcription factor (ETF), itself composed of OPG118 and OPG133, thereby allowing the early genes transcription. Late transcription, and probably also intermediate transcription, require newly synthesized RNA polymerase. The protein is DNA-directed RNA polymerase 19 kDa subunit (OPG131) of Variola virus (isolate Human/India/Ind3/1967) (VARV).